Reading from the N-terminus, the 337-residue chain is DNA-directed RNA polymerase subunit alpha (337 aa).

The interval 1–233 (MVREKVTVST…DLFIPFLHME (233 aa)) is alpha N-terminal domain (alpha-NTD). An alpha C-terminal domain (alpha-CTD) region spans residues 265-337 (KKIALKSIFI…FVIDLAKNKF (73 aa)).

It belongs to the RNA polymerase alpha chain family. In plastids the minimal PEP RNA polymerase catalytic core is composed of four subunits: alpha, beta, beta', and beta''. When a (nuclear-encoded) sigma factor is associated with the core the holoenzyme is formed, which can initiate transcription.

The protein localises to the plastid. The protein resides in the chloroplast. The catalysed reaction is RNA(n) + a ribonucleoside 5'-triphosphate = RNA(n+1) + diphosphate. DNA-dependent RNA polymerase catalyzes the transcription of DNA into RNA using the four ribonucleoside triphosphates as substrates. This chain is DNA-directed RNA polymerase subunit alpha, found in Solanum lycopersicum (Tomato).